Here is a 399-residue protein sequence, read N- to C-terminus: Dual-specificity RNA methyltransferase RlmN (399 aa).

The active-site Proton acceptor is E122. Positions 128-371 constitute a Radical SAM core domain; it reads ETDRGTLCVS…VRTPRGRDIL (244 aa). A disulfide bond links C135 and C374. [4Fe-4S] cluster is bound by residues C142, C146, and C149. S-adenosyl-L-methionine is bound by residues 200 to 201, S232, 254 to 256, and N331; these read GE and SLH. C374 serves as the catalytic S-methylcysteine intermediate.

This sequence belongs to the radical SAM superfamily. RlmN family. [4Fe-4S] cluster serves as cofactor.

Its subcellular location is the cytoplasm. The catalysed reaction is adenosine(2503) in 23S rRNA + 2 reduced [2Fe-2S]-[ferredoxin] + 2 S-adenosyl-L-methionine = 2-methyladenosine(2503) in 23S rRNA + 5'-deoxyadenosine + L-methionine + 2 oxidized [2Fe-2S]-[ferredoxin] + S-adenosyl-L-homocysteine. The enzyme catalyses adenosine(37) in tRNA + 2 reduced [2Fe-2S]-[ferredoxin] + 2 S-adenosyl-L-methionine = 2-methyladenosine(37) in tRNA + 5'-deoxyadenosine + L-methionine + 2 oxidized [2Fe-2S]-[ferredoxin] + S-adenosyl-L-homocysteine. In terms of biological role, specifically methylates position 2 of adenine 2503 in 23S rRNA and position 2 of adenine 37 in tRNAs. m2A2503 modification seems to play a crucial role in the proofreading step occurring at the peptidyl transferase center and thus would serve to optimize ribosomal fidelity. This is Dual-specificity RNA methyltransferase RlmN from Rhodopseudomonas palustris (strain BisB18).